Reading from the N-terminus, the 155-residue chain is Transcriptional repressor NrdR (155 aa).

A zinc finger spans residues 3 to 34 (CPFCGNVDTQVKDSRPAEDHVAIRRRRFCPAC). Residues 49–139 (LVVIKSSGKR…VYKNFQAADD (91 aa)) form the ATP-cone domain.

Belongs to the NrdR family. Zn(2+) serves as cofactor.

In terms of biological role, negatively regulates transcription of bacterial ribonucleotide reductase nrd genes and operons by binding to NrdR-boxes. This chain is Transcriptional repressor NrdR, found in Dinoroseobacter shibae (strain DSM 16493 / NCIMB 14021 / DFL 12).